A 154-amino-acid chain; its full sequence is Transcriptional repressor NrdR (154 aa).

A zinc finger lies at 3–34 (CPTCKYNGTRVVDSRPADDGNSIRRRRECEKC). Positions 49-139 (LIVVKKDGAR…VYRQFKDISV (91 aa)) constitute an ATP-cone domain.

Belongs to the NrdR family. Requires Zn(2+) as cofactor.

In terms of biological role, negatively regulates transcription of bacterial ribonucleotide reductase nrd genes and operons by binding to NrdR-boxes. This Listeria innocua serovar 6a (strain ATCC BAA-680 / CLIP 11262) protein is Transcriptional repressor NrdR.